Consider the following 85-residue polypeptide: Beta-defensin 18 (85 aa).

The signal sequence occupies residues 1 to 23; that stretch reads MQSAMKLFFIFLIFVFSVSCGPS. 3 cysteine pairs are disulfide-bonded: Cys-39–Cys-65, Cys-46–Cys-60, and Cys-50–Cys-66.

Belongs to the beta-defensin family.

The protein localises to the secreted. In terms of biological role, has antibacterial activity. This Rattus norvegicus (Rat) protein is Beta-defensin 18 (Defb18).